The following is a 306-amino-acid chain: ORF-B protein (306 aa).

Transmembrane regions (helical) follow at residues 92 to 112 (MIQWDYVFYLLPRVWIMFPFI), 120 to 140 (LTHLLTLTTSVLSATSLVFGW), and 161 to 181 (VIEWLAQFSFLFTHVTLIVVS).

As to quaternary structure, interacts with host RACK1.

Its subcellular location is the host cytoplasm. It localises to the host cell membrane. This Sander vitreus (Walleye) protein is ORF-B protein.